The chain runs to 497 residues: UDP-N-acetylmuramoyl-L-alanyl-D-glutamate--2,6-diaminopimelate ligase (497 aa).

Residues L27 and S29 each coordinate UDP-N-acetyl-alpha-D-muramoyl-L-alanyl-D-glutamate. 116 to 122 contacts ATP; it reads GTNGKTT. UDP-N-acetyl-alpha-D-muramoyl-L-alanyl-D-glutamate contacts are provided by residues N157, 158 to 159, S185, Q191, and R193; that span reads TT. K225 carries the N6-carboxylysine modification. Residues R392, 416–419, G467, and E471 each bind meso-2,6-diaminopimelate; that span reads DNPR. Positions 416–419 match the Meso-diaminopimelate recognition motif motif; it reads DNPR.

This sequence belongs to the MurCDEF family. MurE subfamily. Mg(2+) is required as a cofactor. In terms of processing, carboxylation is probably crucial for Mg(2+) binding and, consequently, for the gamma-phosphate positioning of ATP.

It is found in the cytoplasm. It carries out the reaction UDP-N-acetyl-alpha-D-muramoyl-L-alanyl-D-glutamate + meso-2,6-diaminopimelate + ATP = UDP-N-acetyl-alpha-D-muramoyl-L-alanyl-gamma-D-glutamyl-meso-2,6-diaminopimelate + ADP + phosphate + H(+). Its pathway is cell wall biogenesis; peptidoglycan biosynthesis. In terms of biological role, catalyzes the addition of meso-diaminopimelic acid to the nucleotide precursor UDP-N-acetylmuramoyl-L-alanyl-D-glutamate (UMAG) in the biosynthesis of bacterial cell-wall peptidoglycan. In Buchnera aphidicola subsp. Schizaphis graminum (strain Sg), this protein is UDP-N-acetylmuramoyl-L-alanyl-D-glutamate--2,6-diaminopimelate ligase.